Reading from the N-terminus, the 576-residue chain is Epsin-1 (576 aa).

The a 1,2-diacyl-sn-glycero-3-phospho-(1D-myo-inositol-4,5-bisphosphate) site is built by Arg8, Lys11, Arg25, Asn30, Arg63, and His73. In terms of domain architecture, ENTH spans 12–144 (NIVHNYSEAE…RDEDRLREER (133 aa)). The segment at 149-185 (KTKEKLAQTATASSAAVGSGPPPEAEQAWPQSSGEEE) is disordered. The segment covering 157–167 (TATASSAAVGS) has biased composition (low complexity). UIM domains are found at residues 183–202 (EEELQLQLALAMSKEEADQP), 208–227 (EDDAQLQLALSLSREEHDKE), and 233–252 (GDDLRLQMAIEESKRETGGK). The segment covering 265–296 (TAPAPAPTTDPWGGPAPMAAAVPTAAPTSDPW) has biased composition (low complexity). The tract at residues 265-404 (TAPAPAPTTD…GGFDTEPDEF (140 aa)) is disordered. 8 tandem repeats follow at residues 274–276 (DPW), 294–296 (DPW), 306–308 (DPW), 319–321 (DPW), 332–334 (DPW), 349–351 (DPW), 367–369 (DPW), and 377–379 (DPW). The segment at 274-379 (DPWGGPAPMA…TPAPAFSDPW (106 aa)) is 8 X 3 AA repeats of [ED]-P-W. The span at 297-314 (GGPPVPPAADPWGGPAPT) shows a compositional bias: pro residues. Residues 332 to 368 (DPWGGTPAPAAGEGPTPDPWGSSDGGVPVSGPSASDP) show a composition bias toward low complexity. Ser382 carries the post-translational modification Phosphoserine; by CDK1. The [DE]-X(1,2)-F-X-X-[FL]-X-X-X-R motif signature appears at 402–411 (DEFSDFDRLR). Phosphoserine is present on residues Ser419, Ser420, Ser435, Ser447, and Ser454. Residues 448 to 576 (LAEAVGSPPP…PAPNTNPFLL (129 aa)) form a disordered region. The segment covering 454-468 (SPPPAATPTPTPPTR) has biased composition (pro residues). Phosphothreonine is present on residues Thr460, Thr464, and Thr470. A Phosphoserine modification is found at Ser473. Residue Thr494 is modified to Phosphothreonine. 2 tandem repeats follow at residues 502 to 504 (NPF) and 518 to 520 (NPF). Positions 502 to 574 (NPFLPGGGPA…GPPAPNTNPF (73 aa)) are 3 X 3 AA repeats of N-P-F. Residue Arg534 is modified to Omega-N-methylarginine. The segment covering 557 to 570 (GLPPMMPPGPPAPN) has biased composition (pro residues). Repeat unit 3 spans residues 572-574 (NPF).

Belongs to the epsin family. In terms of assembly, monomer. Binds clathrin, ZBTB16/ZNF145 and ITSN1. Binds ubiquitinated proteins. Binds AP2A1 and AP2A2. Interacts with RALBP1 in a complex also containing NUMB and TFAP2A during interphase and mitosis. Interacts with AP2B1. Interacts with UBQLN2. Interacts with REPS2; the interaction is direct. Interacts with EPS15; the interaction is direct. Interacts with ENTREP1. Phosphorylated on serine and/or threonine residues in mitotic cells. Phosphorylation reduces interaction with REPS2, AP-2 and the membrane fraction. Depolarization of synaptosomes results in dephosphorylation. In terms of processing, ubiquitinated.

Its subcellular location is the cytoplasm. It is found in the cell membrane. It localises to the nucleus. The protein resides in the membrane. The protein localises to the clathrin-coated pit. In terms of biological role, binds to membranes enriched in phosphatidylinositol 4,5-bisphosphate (PtdIns(4,5)P2). Modifies membrane curvature and facilitates the formation of clathrin-coated invaginations. Regulates receptor-mediated endocytosis. This is Epsin-1 (EPN1) from Homo sapiens (Human).